A 574-amino-acid chain; its full sequence is Zinc finger protein 394 (574 aa).

At serine 12 the chain carries Phosphoserine. A Glycyl lysine isopeptide (Lys-Gly) (interchain with G-Cter in SUMO2) cross-link involves residue lysine 40. Residues 64 to 146 (RLHFRQLRYQ…AVVRALQRAL (83 aa)) form the SCAN box domain. One can recognise a KRAB domain in the interval 155 to 230 (VTFEDMAVSL…LQEAFQGKHP (76 aa)). Positions 182–202 (ESAQKDSGSTVPPSLESRVEN) are disordered. Residues lysine 203, lysine 228, and lysine 254 each participate in a glycyl lysine isopeptide (Lys-Gly) (interchain with G-Cter in SUMO2) cross-link. Residues 231–284 (LFSKCGSTHEDRVEKQSGNPLPLKLENSAEAEGLNSISDVNKNGSIEGEDSKNN) form a disordered region. A compositionally biased stretch (polar residues) spans 265–274 (NSISDVNKNG). Residue lysine 282 forms a Glycyl lysine isopeptide (Lys-Gly) (interchain with G-Cter in SUMO2) linkage. C2H2-type zinc fingers lie at residues 358-380 (YKCGNCGKSFKQRSDLFRHQRIH), 386-408 (YGCQECGKSFSQSAALTKHQRTH), 414-436 (YTCLKCGERFRQNSHLNRHQSTH), 442-463 (FKCEECGETCRISNLFRHQRLH), 469-491 (YKCEECKKSFKQRSDLFKHHRIH), 497-519 (YGCSVCGKRFNQSATLIKHQRIH), and 525-547 (YKCLECGERFRQSTHLIRHQRIH). Residue lysine 443 forms a Glycyl lysine isopeptide (Lys-Gly) (interchain with G-Cter in SUMO2) linkage.

This sequence belongs to the krueppel C2H2-type zinc-finger protein family.

The protein resides in the nucleus. Its function is as follows. May be involved in transcriptional regulation. The polypeptide is Zinc finger protein 394 (ZNF394) (Pongo abelii (Sumatran orangutan)).